The primary structure comprises 343 residues: SET and MYND domain-containing protein DDB_G0292454 (343 aa).

Positions 77–307 (EPFISYPSII…PGDEITISYT (231 aa)) constitute an SET domain. Zn(2+) is bound by residues Cys-93, Cys-96, Cys-111, Cys-114, Cys-120, Cys-124, His-133, and Cys-137. The MYND-type zinc-finger motif lies at 93 to 137 (CNHCLKEIKKEEEEIKQECEECKVYKYCSIECKEKSSIEYHSVLC).

This sequence belongs to the class V-like SAM-binding methyltransferase superfamily.

Probable methyltransferase. The polypeptide is SET and MYND domain-containing protein DDB_G0292454 (Dictyostelium discoideum (Social amoeba)).